Reading from the N-terminus, the 525-residue chain is COP9 signalosome complex subunit 1b (525 aa).

Residues 298 to 460 (HFLNANFDHC…KILFAKEADQ (163 aa)) enclose the PCI domain.

This sequence belongs to the CSN1 family. In terms of assembly, component of the CSN complex, probably composed of CSN1b, alien/CSN2, CSN3, CSN4, CSN5, CSN6, CSN7 and CSN8.

The protein resides in the cytoplasm. The protein localises to the nucleus. Its function is as follows. Essential component of the COP9 signalosome complex (CSN), a complex involved in various cellular and developmental processes. The CSN complex is an essential regulator of the ubiquitin (Ubl) conjugation pathway by mediating the deneddylation of the cullin subunits of the SCF-type E3 ligase complexes, leading to decrease the Ubl ligase activity of SCF. The CSN complex plays an essential role in oogenesis and embryogenesis and is required for proper photoreceptor R cell differentiation and promote lamina glial cell migration or axon targeting. It also promotes Ubl-dependent degradation of cyclin E (CycE) during early oogenesis. This is COP9 signalosome complex subunit 1b (CSN1b) from Drosophila melanogaster (Fruit fly).